A 1252-amino-acid polypeptide reads, in one-letter code: Nephrin (1252 aa).

The first 35 residues, 1 to 35 (MGAKRVTVRGARTSPIHRMSSLTPLLLMGMLTSGL), serve as a signal peptide directing secretion. Over 36–1078 (AESPVPTSAP…PGPPRLPLLP (1043 aa)) the chain is Extracellular. 6 Ig-like C2-type domains span residues 39–144 (PVPT…VILS), 149–247 (PKVL…ASFT), 256–347 (PPVI…RSIT), 354–448 (PSAI…KSLT), 454–554 (PAQK…TQLV), and 558–649 (PPTN…ETVS). The N-linked (GlcNAc...) asparagine glycan is linked to Asn54. 3 disulfides stabilise this stretch: Cys67–Cys125, Cys174–Cys231, and Cys279–Cys331. Residue Asn370 is glycosylated (N-linked (GlcNAc...) asparagine). Residues Cys375 and Cys431 are joined by a disulfide bond. The residue at position 446 (Ser446) is a Phosphoserine. A disulfide bridge links Cys479 with Cys542. Asn561, Asn578, Asn591, and Asn722 each carry an N-linked (GlcNAc...) asparagine glycan. The cysteines at positions 581 and 637 are disulfide-linked. Ig-like C2-type domains lie at 754 to 846 (PTIR…LVRL) and 852 to 953 (PQVD…VSIS). 2 disulfides stabilise this stretch: Cys775/Cys830 and Cys877/Cys934. In terms of domain architecture, Fibronectin type-III spans 957–1052 (PPLGLKVVSI…IQVSVTTPGP (96 aa)). Residues 1043-1067 (IQVSVTTPGPDQAPEDTDHQLPTEL) are disordered. The chain crosses the membrane as a helical span at residues 1079–1099 (VLFAVGGLLLLSNASCVGGLL). Over 1100–1252 (WRRRLRRLAE…LPFELRGHLV (153 aa)) the chain is Cytoplasmic. Position 1112 is a phosphoserine (Ser1112). Residues 1113–1127 (EKTEAGSEDRIRNEY) are compositionally biased toward basic and acidic residues. A disordered region spans residues 1113–1144 (EKTEAGSEDRIRNEYEESQWTGDRDTRSSTVS). Phosphothreonine is present on Thr1115. The residue at position 1119 (Ser1119) is a Phosphoserine. Phosphotyrosine; by FYN is present on Tyr1204.

The protein belongs to the immunoglobulin superfamily. As to quaternary structure, interacts with NPHS2 and with CD2AP (via C-terminal domain). Self-associates (via the Ig-like domains). Also interacts (via the Ig-like domains) with KIRREL1/NEPH1 and KIRREL2; the interaction with KIRREL1 is dependent on KIRREL1 glycosylation. Interacts with KIRREL3. Interacts with MAGI1 (via PDZ 2 and 3 domains) forming a tripartite complex with IGSF5/JAM4. Interacts with DDN; the interaction is direct. Forms a complex with ACTN4, CASK, IQGAP1, MAGI2, SPTAN1 and SPTBN1. Interacts with phosphatidylinositol 3-kinase regulatory subunit PIK3R1; the interaction is reduced by high glucose levels. Post-translationally, phosphorylated at Tyr-1204 by FYN, leading to the recruitment and activation of phospholipase C-gamma-1/PLCG1. Tyrosine phosphorylation is reduced by high glucose levels. Dephosphorylated by tensin TNS2 which leads to reduced binding of NPHN1 to PIK3R1. Strongly expressed in the podocytes of kidney glomeruli (at protein level) and at lower levels in the spleen.

The protein localises to the cell membrane. Seems to play a role in the development or function of the kidney glomerular filtration barrier. Regulates glomerular vascular permeability. May anchor the podocyte slit diaphragm to the actin cytoskeleton. Plays a role in skeletal muscle formation through regulation of myoblast fusion. This chain is Nephrin (Nphs1), found in Rattus norvegicus (Rat).